A 126-amino-acid polypeptide reads, in one-letter code: Profilin-3 (126 aa).

Belongs to the profilin family. As to quaternary structure, occurs in many kinds of cells as a complex with monomeric actin in a 1:1 ratio. In terms of tissue distribution, in embryos, expression is specifically detected in body wall muscle cells. In adults, expression is localized to a striking dot-like fashion in body wall muscle.

The protein localises to the cytoplasm. The protein resides in the cytoskeleton. Its function is as follows. Binds to actin and affects the structure of the cytoskeleton. At high concentrations, profilin prevents the polymerization of actin, whereas it enhances it at low concentrations. By binding to PIP2, it inhibits the formation of IP3 and DG. Also binds to poly(L-proline) and phosphatidylinositol 4,5-bisphosphate micelles. The chain is Profilin-3 (pfn-3) from Caenorhabditis elegans.